Consider the following 508-residue polypeptide: MMELQLDFFSVTSFIIFFLFLFRLVWDWKNSTDEKLPPGPSKLPIIGSLHHLFGRNVDLPYYALTDLAKIYGPLMHLQLGKMSLVVASSAKMFKELMKENDLAISQRPVPYVARVLEDAGRDIAFVPYGDYWRQIRKISRMELFSVRKVQALHYIREDQSSKLIESIRASAGSVINLSKEVSHYTSTVVARAAFGSGCKDQDKFIRLSLEMVAAAGAVSTLPDMFPLLGFISVISGKKAFLKNIQKEADKILDVIIDEHIQRMKSKGYEEGESDKEDIVDVLLRLERTGELEISITPQDIKAVIWSVFAGGTDTSSTTTLWVMSELMRNPKVMEKVQAEVREMLKGKTEIYESDIQDLTYMRAVMKEALRLRIPGPLLLPREAMEPLEVDGYVIPAKTKILFNAWAVTRDPEIWKDPESFIPDRFIENPIDYKGTNYEFTPFGSGRRICPGMNFGIANVELPLAKLLYFFDWKLPYGMKPDDLDMTAKFGVVCGRKNDLHLIPTPYDP.

A helical transmembrane segment spans residues Leu-6–Trp-26. Cys-449 lines the heme pocket.

This sequence belongs to the cytochrome P450 family. Heme serves as cofactor. Mainly expressed in roots and, to a lesser extent, in stems.

Its subcellular location is the membrane. It carries out the reaction tirucalla-7,24-dien-3beta-ol + 2 reduced [NADPH--hemoprotein reductase] + 2 O2 = dihydroniloticin + 2 oxidized [NADPH--hemoprotein reductase] + 2 H2O + 2 H(+). It functions in the pathway secondary metabolite biosynthesis; terpenoid biosynthesis. Functionally, monooxygenase involved in the biosynthesis of quassinoids triterpene natural products such as ailanthone, chaparrinone, glaucarubinone and amarolide, allelopathic degraded triterpene lactones inhibiting the growth of other plants, and possessing antimalarial, antifeedant, insecticidal, anti-inflammatory and anticancer activities. Catalyzes the conversion of tirucalladienol to dihydroniloticin. This Ailanthus altissima (Tree-of-heaven) protein is Dihydroniloticin synthase CYP71CD4.